The sequence spans 190 residues: Peptidoglycan recognition protein 1 (190 aa).

An N-terminal signal peptide occupies residues 1 to 21 (MSRRYTPLAWVLLALLGLGAA). Q22 is subject to Pyrrolidone carboxylic acid. 3 disulfides stabilise this stretch: C24/C148, C40/C85, and C61/C67. An N-acetylmuramoyl-L-alanine amidase domain is found at 46–174 (QPVRYVVVSH…RDVQQTLSPG (129 aa)).

This sequence belongs to the N-acetylmuramoyl-L-alanine amidase 2 family. As to quaternary structure, homodimer; disulfide-linked. In terms of tissue distribution, synthesized only in bone marrow. The mature protein is stored in the cytoplasmic granules of eosinophils and neutrophils but is absent from monocytes, lymphocytes, or platelets.

Its subcellular location is the secreted. The protein localises to the cytoplasmic granule. Its function is as follows. Innate immunity protein that plays several important functions in antimicrobial and antitumor defense systems. Acts as a pattern receptor that binds to murein peptidoglycans (PGN) of Gram-positive bacteria and thus provides bactericidal activity. Forms an equimolar complex with heat shock protein HSPA1A and induces programmed cell death through apoptosis and necroptosis in tumor cell lines by activating the TNFR1 receptor on the target cell membrane. In addition, acts in complex with the Ca(2+)-binding protein S100A4 as a chemoattractant able to induce lymphocyte movement. Mechanistically, this complex acts as a ligand of the chemotactic receptors CCR5 and CXCR3 which are present on the cells of the immune system. Also promotes the activation of lymphocytes that become able to kill virus-infected cells as well as tumor cells by modulating the spectrum of their target-cell specificity. Induction of cytotoxicity on monocyte surface requires interaction with TREM1 receptor. This Bos taurus (Bovine) protein is Peptidoglycan recognition protein 1 (PGLYRP1).